The following is a 1118-amino-acid chain: Protein SUPPRESSOR OF NPR1-1 CONSTITUTIVE 4 (1118 aa).

The first 35 residues, 1 to 35 (MNSQQSTRTKQMLQQSSTHLLCGVVLLQLFAAQVD), serve as a signal peptide directing secretion. The Extracellular segment spans residues 36-751 (AQRSTSPWQT…PLRNFLKVIR (716 aa)). The region spanning 51–353 (PLVIARGGFS…DFPLTASASV (303 aa)) is the GP-PDE 1 domain. Residues Asn106, Asn195, Asn251, Asn260, Asn318, Asn335, Asn362, Asn422, Asn433, Asn497, Asn557, Asn573, and Asn656 are each glycosylated (N-linked (GlcNAc...) asparagine). In terms of domain architecture, GP-PDE 2 spans 369–670 (FLVISKNGAS…EFPYTAARYK (302 aa)). The helical transmembrane segment at 752-772 (IVSWSVAGVVLFLVLLTLVFC) threads the bilayer. Residues 773 to 1118 (FHRKRETRLR…SEDVSVYTEG (346 aa)) are Cytoplasmic-facing. The Protein kinase domain maps to 805-1094 (KSFAEVVGRG…ALEVPPRPVL (290 aa)). ATP is bound by residues 811 to 819 (VGRGGFGIV) and Lys833. Catalysis depends on Asp928, which acts as the Proton acceptor.

This sequence in the N-terminal section; belongs to the glycerophosphoryl diester phosphodiesterase family. In the C-terminal section; belongs to the protein kinase superfamily. Ser/Thr protein kinase family. Expressed in shoots, rosette and cauline leaves, stems, flowers and siliques.

The protein localises to the cell membrane. It catalyses the reaction a sn-glycero-3-phosphodiester + H2O = an alcohol + sn-glycerol 3-phosphate + H(+). The enzyme catalyses L-seryl-[protein] + ATP = O-phospho-L-seryl-[protein] + ADP + H(+). The catalysed reaction is L-threonyl-[protein] + ATP = O-phospho-L-threonyl-[protein] + ADP + H(+). Functionally, atypical receptor-like kinase involved in disease resistance. This Arabidopsis thaliana (Mouse-ear cress) protein is Protein SUPPRESSOR OF NPR1-1 CONSTITUTIVE 4.